Consider the following 119-residue polypeptide: Small ribosomal subunit protein uS13 (119 aa).

Residues 94–119 are disordered; it reads GLPVRGQRTQTNARTRKGPRRGPAGK.

Belongs to the universal ribosomal protein uS13 family. In terms of assembly, part of the 30S ribosomal subunit. Forms a loose heterodimer with protein S19. Forms two bridges to the 50S subunit in the 70S ribosome.

Functionally, located at the top of the head of the 30S subunit, it contacts several helices of the 16S rRNA. In the 70S ribosome it contacts the 23S rRNA (bridge B1a) and protein L5 of the 50S subunit (bridge B1b), connecting the 2 subunits; these bridges are implicated in subunit movement. Contacts the tRNAs in the A and P-sites. This is Small ribosomal subunit protein uS13 from Alkalilimnicola ehrlichii (strain ATCC BAA-1101 / DSM 17681 / MLHE-1).